The following is a 235-amino-acid chain: Segregation and condensation protein A (235 aa).

The protein belongs to the ScpA family. Component of a cohesin-like complex composed of ScpA, ScpB and the Smc homodimer, in which ScpA and ScpB bind to the head domain of Smc. The presence of the three proteins is required for the association of the complex with DNA.

It is found in the cytoplasm. Participates in chromosomal partition during cell division. May act via the formation of a condensin-like complex containing Smc and ScpB that pull DNA away from mid-cell into both cell halves. This chain is Segregation and condensation protein A, found in Streptococcus equi subsp. zooepidemicus (strain MGCS10565).